Consider the following 1115-residue polypeptide: DNA-directed RNA polymerase subunit beta (1115 aa).

Residues 1084–1115 (HEAGEGEDDEYFEEDEEAVDDEPMTFDDDDME) are disordered. Over residues 1088–1115 (EGEDDEYFEEDEEAVDDEPMTFDDDDME) the composition is skewed to acidic residues.

The protein belongs to the RNA polymerase beta chain family. In terms of assembly, the RNAP catalytic core consists of 2 alpha, 1 beta, 1 beta' and 1 omega subunit. When a sigma factor is associated with the core the holoenzyme is formed, which can initiate transcription.

The enzyme catalyses RNA(n) + a ribonucleoside 5'-triphosphate = RNA(n+1) + diphosphate. Its function is as follows. DNA-dependent RNA polymerase catalyzes the transcription of DNA into RNA using the four ribonucleoside triphosphates as substrates. This Desulfitobacterium hafniense (strain DSM 10664 / DCB-2) protein is DNA-directed RNA polymerase subunit beta.